The primary structure comprises 138 residues: Aspartate 1-decarboxylase (138 aa).

Serine 25 acts as the Schiff-base intermediate with substrate; via pyruvic acid in catalysis. Serine 25 carries the post-translational modification Pyruvic acid (Ser). Threonine 57 contributes to the substrate binding site. Catalysis depends on tyrosine 58, which acts as the Proton donor. 73–75 (GAA) is a binding site for substrate. The disordered stretch occupies residues 116 to 138 (ELGGDPAQVPDGSGLKNPRHPEA).

Belongs to the PanD family. As to quaternary structure, heterooctamer of four alpha and four beta subunits. Requires pyruvate as cofactor. Post-translationally, is synthesized initially as an inactive proenzyme, which is activated by self-cleavage at a specific serine bond to produce a beta-subunit with a hydroxyl group at its C-terminus and an alpha-subunit with a pyruvoyl group at its N-terminus.

Its subcellular location is the cytoplasm. The enzyme catalyses L-aspartate + H(+) = beta-alanine + CO2. The protein operates within cofactor biosynthesis; (R)-pantothenate biosynthesis; beta-alanine from L-aspartate: step 1/1. In terms of biological role, catalyzes the pyruvoyl-dependent decarboxylation of aspartate to produce beta-alanine. This Corynebacterium jeikeium (strain K411) protein is Aspartate 1-decarboxylase.